The following is a 236-amino-acid chain: Uridylate kinase (236 aa).

K9 to G12 is a binding site for ATP. A UMP-binding site is contributed by G51. G52 and R56 together coordinate ATP. Residues D71 and T132–T139 contribute to the UMP site. Positions 166 and 169 each coordinate ATP.

The protein belongs to the UMP kinase family. As to quaternary structure, homohexamer.

The protein resides in the cytoplasm. It catalyses the reaction UMP + ATP = UDP + ADP. The protein operates within pyrimidine metabolism; CTP biosynthesis via de novo pathway; UDP from UMP (UMPK route): step 1/1. With respect to regulation, inhibited by UTP. In terms of biological role, catalyzes the reversible phosphorylation of UMP to UDP. The chain is Uridylate kinase from Mycoplasmoides gallisepticum (strain R(low / passage 15 / clone 2)) (Mycoplasma gallisepticum).